The primary structure comprises 1414 residues: Alpha-(1-&gt;3)-arabinofuranosyltransferase (1414 aa).

9 helical membrane-spanning segments follow: residues 57-77 (YLFP…PGWV), 81-101 (LWWA…AEAL), 128-148 (AISS…PVIL), 167-187 (VALM…AAVI), 203-223 (AWWL…LLML), 273-293 (STTA…GLAL), 302-322 (LITM…GGLG), 352-372 (LPLA…GSAP), and 389-409 (VAVA…AWTA). One can recognise an F5/8 type C domain in the interval 687–845 (YPSDGADLVY…QYDASGFAHP (159 aa)). 4 helical membrane passes run 1253–1273 (VGLI…LIPV), 1297–1317 (ALVA…GAAM), 1333–1353 (VWDN…GSVL), and 1364–1384 (YVGH…FLAA). The segment at 1393 to 1414 (PEPSEDGRSAKPEHTGASAHAG) is disordered. The span at 1394-1406 (EPSEDGRSAKPEH) shows a compositional bias: basic and acidic residues.

The protein localises to the membrane. It carries out the reaction Adds an alpha-D-arabinofuranosyl group from trans,octacis-decaprenylphospho-beta-D-arabinofuranose at the 3-O-position of an alpha-(1-&gt;5)-arabinofuranan chain attached to a beta-(1-&gt;5)-galactofuranan chain.. Its pathway is cell wall biogenesis; cell wall polysaccharide biosynthesis. Functionally, involved in the biosynthesis of the arabinogalactan (AG) region of the mycolylarabinogalactan-peptidoglycan (mAGP) complex, an essential component of the mycobacterial cell wall. Catalyzes the addition of an arabinofuranosyl (Araf) residue from the sugar donor decaprenyl-phospho-arabinose (DPA) on the C-3 of an alpha-(1-&gt;5)-linked Araf from the arabinan backbone of AG. This Mycolicibacterium smegmatis (strain ATCC 700084 / mc(2)155) (Mycobacterium smegmatis) protein is Alpha-(1-&gt;3)-arabinofuranosyltransferase (aftD).